We begin with the raw amino-acid sequence, 149 residues long: Transcriptional regulator MraZ (149 aa).

2 consecutive SpoVT-AbrB domains span residues 7 to 54 (KYVN…GISH) and 83 to 126 (AVQL…QPQN).

This sequence belongs to the MraZ family. Forms oligomers.

The protein resides in the cytoplasm. It localises to the nucleoid. This Rickettsia akari (strain Hartford) protein is Transcriptional regulator MraZ.